The chain runs to 214 residues: Ras-like protein rasZ (214 aa).

Position 16-23 (16-23 (GDGGVGKT)) interacts with GTP. Residues 38–46 (YDPTIEDSY) carry the Effector region motif. GTP contacts are provided by residues 63–67 (DTAGQ) and 122–125 (NKSD). Cysteine 211 is modified (cysteine methyl ester). Cysteine 211 carries S-geranylgeranyl cysteine lipidation. Positions 212–214 (KMM) are cleaved as a propeptide — removed in mature form.

It belongs to the small GTPase superfamily. Ras family.

The protein resides in the cell membrane. The catalysed reaction is GTP + H2O = GDP + phosphate + H(+). In terms of biological role, ras proteins bind GDP/GTP and possess intrinsic GTPase activity. In Dictyostelium discoideum (Social amoeba), this protein is Ras-like protein rasZ (rasZ).